A 748-amino-acid chain; its full sequence is Phytochrome-like protein Cph1 (748 aa).

The PAS domain occupies 19-86 (AIHTAHLIQP…IQSRLTAGQI (68 aa)). The chromophore binding domain stretch occupies residues 87-510 (SSLNPSKLWA…KKAIVNLILR (424 aa)). Positions 152–320 (NLRDFYDVIV…VVFSNISAQE (169 aa)) constitute a GAF domain. Cysteine 259 provides a ligand contact to a tetrapyrrole. A Histidine kinase domain is found at 535-748 (IASHDLQEPL…TFYFSIPIGN (214 aa)). Histidine 538 bears the Phosphohistidine; by autocatalysis mark.

The protein in the N-terminal section; belongs to the phytochrome family. Homodimer. In terms of processing, contains one covalently linked tetrapyrrole chromophore.

It catalyses the reaction ATP + protein L-histidine = ADP + protein N-phospho-L-histidine.. In terms of biological role, regulatory photoreceptor which exists in two forms that are reversibly interconvertible by light: the R form that absorbs maximally in the red region of the spectrum and the FR form that absorbs maximally in the far-red region. Also has a slight blue shift for the far-red maximum. Forms a two-component system with the Rrcp1 response regulator. This is Phytochrome-like protein Cph1 (cph1) from Synechocystis sp. (strain ATCC 27184 / PCC 6803 / Kazusa).